We begin with the raw amino-acid sequence, 152 residues long: UPF0266 membrane protein KPK_1957 (152 aa).

The next 3 membrane-spanning stretches (helical) occupy residues 6 to 26 (LVIILFILALLAYAVYDQFIM), 45 to 65 (VDGLIFVGLTAILIYNNITQH), and 67 to 87 (TPITTWLLSALALMGLYLFWI).

The protein belongs to the UPF0266 family.

Its subcellular location is the cell inner membrane. The polypeptide is UPF0266 membrane protein KPK_1957 (Klebsiella pneumoniae (strain 342)).